Consider the following 206-residue polypeptide: Probable glutathione S-transferase 8 (206 aa).

Residues 2–79 (VHYKLSYFPI…FLARQFGING (78 aa)) form the GST N-terminal domain. Residues Tyr-8, Trp-39, Lys-43, 49 to 51 (GQL), and 63 to 64 (QS) each bind glutathione. The GST C-terminal domain maps to 81–206 (CAWEEAQVNS…WLETRPETQF (126 aa)).

This sequence belongs to the GST superfamily. Sigma family.

The catalysed reaction is RX + glutathione = an S-substituted glutathione + a halide anion + H(+). Functionally, conjugation of reduced glutathione to a wide number of exogenous and endogenous hydrophobic electrophiles. The sequence is that of Probable glutathione S-transferase 8 (gst-8) from Caenorhabditis elegans.